The chain runs to 511 residues: Synaptotagmin-6 (511 aa).

Residues 1–59 (MSGVWGAGGPRCQAALAVLASLCRARPPPLGLDVETCQSFELQPPEQSPSAADSGTSVS) are Vesicular-facing. The interval 12–38 (CQAALAVLASLCRARPPPLGLDVETCQ) is cysteine motif. A helical membrane pass occupies residues 60-80 (LLAVVVIVCGVALVAVFFFLF). Residues 81–511 (WKLCWMPWRN…KSFKEGTPRL (431 aa)) are Cytoplasmic-facing. Residues 93–103 (ASSPSSANPAS) are compositionally biased toward low complexity. Disordered stretches follow at residues 93–118 (ASSPSSANPASEILQSPSSRGNMADK) and 157–182 (TKLQRQTTEPASSTRHTSFKRHLPRQ). The span at 160–172 (QRQTTEPASSTRH) shows a compositional bias: polar residues. A Phosphoserine modification is found at serine 217. 2 C2 domains span residues 230–351 (SCGK…SIWK) and 362–495 (DLGE…AHWH). The Ca(2+) site is built by aspartate 261, aspartate 267, aspartate 319, phenylalanine 320, aspartate 321, serine 324, aspartate 327, aspartate 393, aspartate 399, aspartate 453, and aspartate 455. Positions 483–511 (MLAYPRKPIAHWHCLAEVKKSFKEGTPRL) are necessary for cell membrane association (isoform 2).

Belongs to the synaptotagmin family. In terms of assembly, isoform 1: Homodimer; disulfide-linked via the cysteine motif. Isoform 1: Can also form heterodimers with SYT3, SYT7, SYT9 and SYT10. Isoform 1: Interacts with STX1A, STX1B and STX2; the interaction is Ca(2+)-dependent. Isoform 2: Is not able to form homodimer and heterodimers. The cofactor is Ca(2+).

It is found in the cytoplasmic vesicle. The protein resides in the secretory vesicle. It localises to the synaptic vesicle membrane. Its subcellular location is the membrane. The protein localises to the cytoplasm. It is found in the cytosol. The protein resides in the cell membrane. In terms of biological role, may be involved in Ca(2+)-dependent exocytosis of secretory vesicles through Ca(2+) and phospholipid binding to the C2 domain or may serve as Ca(2+) sensors in the process of vesicular trafficking and exocytosis. May mediate Ca(2+)-regulation of exocytosis in acrosomal reaction in sperm. This Rattus norvegicus (Rat) protein is Synaptotagmin-6 (Syt6).